Reading from the N-terminus, the 314-residue chain is Pathogenicity locus probable regulatory protein HrpR (314 aa).

A Sigma-54 factor interaction domain is found at 11-239; it reads TRWNVTALSA…LKSAANAICP (229 aa). Residues 39 to 46 and 101 to 110 each bind ATP; these read GETGTGKD and SNGGTLYLDE. A DNA-binding region (H-T-H motif) is located at residues 281-300; the sequence is FDAVLEELELPRRTLYHRMK.

In terms of biological role, member of the two-component regulatory system HrpR/HrpS that regulates the activation of the sigma factor hrpL which itself induces the expression of hprD as well as other hrp loci which are involved in plant pathogenicity, hrmA and avr genes. Probably interacts with sigma-54. In Pseudomonas syringae pv. syringae, this protein is Pathogenicity locus probable regulatory protein HrpR (hrpR).